We begin with the raw amino-acid sequence, 722 residues long: Polyribonucleotide nucleotidyltransferase (722 aa).

Mg(2+) is bound by residues D495 and D501. The 60-residue stretch at 562–621 (PRLLSFRIDPELIGTVIGPGGRTIKGITERTNTKIDIEDGGIVTIASHDGAAAEEAQRII) folds into the KH domain. The 69-residue stretch at 631 to 699 (GEIFPGSITR…NRGRINLTLR (69 aa)) folds into the S1 motif domain. A disordered region spans residues 700–722 (GVSQNGGMSNYPEPTPTPVAPLT). The span at 712–722 (EPTPTPVAPLT) shows a compositional bias: pro residues.

Belongs to the polyribonucleotide nucleotidyltransferase family. Mg(2+) is required as a cofactor.

The protein resides in the cytoplasm. The enzyme catalyses RNA(n+1) + phosphate = RNA(n) + a ribonucleoside 5'-diphosphate. Its function is as follows. Involved in mRNA degradation. Catalyzes the phosphorolysis of single-stranded polyribonucleotides processively in the 3'- to 5'-direction. This is Polyribonucleotide nucleotidyltransferase from Prochlorococcus marinus (strain NATL1A).